The primary structure comprises 135 residues: Large ribosomal subunit protein uL16c (135 aa).

Belongs to the universal ribosomal protein uL16 family. Part of the 50S ribosomal subunit.

Its subcellular location is the plastid. The protein resides in the chloroplast. This is Large ribosomal subunit protein uL16c from Piper cenocladum (Ant piper).